Reading from the N-terminus, the 130-residue chain is Sulfurtransferase TusD (130 aa).

Cys80 functions as the Cysteine persulfide intermediate in the catalytic mechanism.

This sequence belongs to the DsrE/TusD family. As to quaternary structure, heterohexamer, formed by a dimer of trimers. The hexameric TusBCD complex contains 2 copies each of TusB, TusC and TusD. The TusBCD complex interacts with TusE.

It is found in the cytoplasm. In terms of biological role, part of a sulfur-relay system required for 2-thiolation of 5-methylaminomethyl-2-thiouridine (mnm(5)s(2)U) at tRNA wobble positions. Accepts sulfur from TusA and transfers it in turn to TusE. The polypeptide is Sulfurtransferase TusD (Proteus mirabilis (strain HI4320)).